The sequence spans 671 residues: Diguanylate cyclase DgcP (671 aa).

2 disordered regions span residues 204 to 223 and 278 to 298; these read AAPS…PPQP and EAGA…PEAP. Position 549 (Asp549) interacts with Mg(2+). Residues Asn557, His562, and Asp566 each coordinate substrate. Glu592 is a Mg(2+) binding site. Glu592 is an active-site residue.

Homodimer. Requires Mg(2+) as cofactor.

It is found in the cell inner membrane. The catalysed reaction is 2 GTP = 3',3'-c-di-GMP + 2 diphosphate. It functions in the pathway purine metabolism; 3',5'-cyclic di-GMP biosynthesis. In terms of biological role, catalyzes the synthesis of cyclic-di-GMP (c-di-GMP) via the condensation of 2 GTP molecules. Cyclic-di-GMP is a second messenger which controls cell surface-associated traits in bacteria. Localizes at the cell poles through interaction with FimV where it increases the local pools of c-di-GMP. This is Diguanylate cyclase DgcP (dgcP) from Pseudomonas aeruginosa (strain ATCC 15692 / DSM 22644 / CIP 104116 / JCM 14847 / LMG 12228 / 1C / PRS 101 / PAO1).